Here is a 163-residue protein sequence, read N- to C-terminus: uncharacterized protein (163 aa).

It belongs to the IMPDH/GMPR family.

This is an uncharacterized protein from Haemophilus influenzae (strain ATCC 51907 / DSM 11121 / KW20 / Rd).